The following is a 118-amino-acid chain: Ribonuclease P protein component (118 aa).

This sequence belongs to the RnpA family. In terms of assembly, consists of a catalytic RNA component (M1 or rnpB) and a protein subunit.

It carries out the reaction Endonucleolytic cleavage of RNA, removing 5'-extranucleotides from tRNA precursor.. RNaseP catalyzes the removal of the 5'-leader sequence from pre-tRNA to produce the mature 5'-terminus. It can also cleave other RNA substrates such as 4.5S RNA. The protein component plays an auxiliary but essential role in vivo by binding to the 5'-leader sequence and broadening the substrate specificity of the ribozyme. The sequence is that of Ribonuclease P protein component from Shewanella putrefaciens (strain CN-32 / ATCC BAA-453).